The chain runs to 155 residues: Ribosome maturation factor RimP (155 aa).

This sequence belongs to the RimP family.

It localises to the cytoplasm. Its function is as follows. Required for maturation of 30S ribosomal subunits. The chain is Ribosome maturation factor RimP from Staphylococcus aureus (strain JH9).